The sequence spans 199 residues: uncharacterized protein (199 aa).

This is an uncharacterized protein from Rattus norvegicus (Rat).